The sequence spans 563 residues: Pyruvate decarboxylase isozyme 3 (563 aa).

Ser-2 is subject to N-acetylserine. The pyruvate site is built by Asp-28 and His-115. Residue Lys-212 forms a Glycyl lysine isopeptide (Lys-Gly) (interchain with G-Cter in ubiquitin) linkage. A Phosphoserine modification is found at Ser-223. Lys-233 is covalently cross-linked (Glycyl lysine isopeptide (Lys-Gly) (interchain with G-Cter in ubiquitin)). Thr-266 carries the post-translational modification Phosphothreonine. A Glycyl lysine isopeptide (Lys-Gly) (interchain with G-Cter in ubiquitin) cross-link involves residue Lys-269. Thr-353 is modified (phosphothreonine). Thiamine diphosphate-binding positions include Thr-390 and 413–415 (GSI). Asp-444 is a binding site for Mg(2+). Thiamine diphosphate contacts are provided by residues 445 to 446 (GS) and 471 to 476 (NDGYTI). Asn-471 and Gly-473 together coordinate Mg(2+). Glu-477 contacts pyruvate. Lys-505 participates in a covalent cross-link: Glycyl lysine isopeptide (Lys-Gly) (interchain with G-Cter in ubiquitin). Thr-522 carries the phosphothreonine modification.

Belongs to the TPP enzyme family. Homotetramer. Mg(2+) is required as a cofactor. Requires thiamine diphosphate as cofactor.

Its subcellular location is the cytoplasm. The catalysed reaction is pyruvate + H(+) = acetaldehyde + CO2. It catalyses the reaction 3-methyl-2-oxobutanoate + H(+) = 2-methylpropanal + CO2. It carries out the reaction (S)-3-methyl-2-oxopentanoate + H(+) = 2-methylbutanal + CO2. The enzyme catalyses indole-3-pyruvate + H(+) = indole-3-acetaldehyde + CO2. The catalysed reaction is 3-phenylpyruvate + H(+) = 2-phenylacetaldehyde + CO2. It catalyses the reaction 2-oxobutanoate + H(+) = propanal + CO2. It carries out the reaction 2-oxopentanoate + H(+) = butanal + CO2. The enzyme catalyses 2 acetaldehyde = acetoin. The catalysed reaction is acetaldehyde + pyruvate + H(+) = acetoin + CO2. Its pathway is fermentation; ethanol fermentation. It participates in amino-acid degradation; Ehrlich pathway. In terms of biological role, minor of three pyruvate decarboxylases (PDC1, PDC5, PDC6) implicated in the nonoxidative conversion of pyruvate to acetaldehyde and carbon dioxide during alcoholic fermentation. Most of the produced acetaldehyde is subsequently reduced to ethanol, but some is required for cytosolic acetyl-CoA production for biosynthetic pathways. The enzyme is also one of five 2-oxo acid decarboxylases (PDC1, PDC5, PDC6, ARO10, and THI3) able to decarboxylate more complex 2-oxo acids (alpha-keto-acids) than pyruvate, which seem mainly involved in amino acid catabolism. Here the enzyme catalyzes the decarboxylation of amino acids, which, in a first step, have been transaminated to the corresponding 2-oxo acids. In a third step, the resulting aldehydes are reduced to alcohols, collectively referred to as fusel oils or alcohols. Its preferred substrates are the transaminated amino acids derived from threonine (2-oxobutanoate), norvaline (2-oxopentanoate), valine (3-methyl-2-oxobutanoate, also alpha-keto-isovalerate), isoleucine ((3S)-3-methyl-2-oxopentanoate, also alpha-keto-beta-methylvalerate), phenylalanine (phenylpyruvate), and tryptophan (3-(indol-3-yl)pyruvate), whereas transaminated leucine is no substrate. In a side-reaction the carbanionic intermediate (or active aldehyde) generated by decarboxylation or by activation of an aldehyde can react with an aldehyde via condensation (or carboligation) yielding a 2-hydroxy ketone, collectively called acyloins. The expression level of this protein in the presence of fermentable carbon sources is so low that it cannot compensate for the other two pyruvate decarboxylases to sustain fermentation. In Saccharomyces cerevisiae (strain ATCC 204508 / S288c) (Baker's yeast), this protein is Pyruvate decarboxylase isozyme 3 (PDC6).